Reading from the N-terminus, the 230-residue chain is MHRLAKIISNAGVCSRRDAEKLIVAGQVKVDGITILSPTTNVDISNQIEVSGTLINNIHKPRLWIYYKPVGLITTHKDPLSRKTVFEQLTGLPRVISIGRLDLNSEGLLLLTNSGDLARQFELPSSRLKRVYHVRAYGKSDILLKSNYKNLEIDGIFYNPHSIKLLKQNKTNCWFEVVLFEGKNREIRRIFEYCGLKVNKLIRIQYGSFTIDNLKPGDYKEINNKILENN.

An S4 RNA-binding domain is found at 2-69; that stretch reads HRLAKIISNA…KPRLWIYYKP (68 aa). Asp-102 serves as the catalytic Nucleophile.

Belongs to the pseudouridine synthase RsuA family.

The enzyme catalyses a uridine in RNA = a pseudouridine in RNA. This is an uncharacterized protein from Rickettsia conorii (strain ATCC VR-613 / Malish 7).